A 151-amino-acid chain; its full sequence is Large-conductance mechanosensitive channel (151 aa).

Transmembrane regions (helical) follow at residues 14 to 34, 38 to 58, and 86 to 106; these read VVDM…VNTL, VLMP…LYLI, and GLFL…FLLV.

It belongs to the MscL family. Homopentamer.

The protein resides in the cell inner membrane. Its function is as follows. Channel that opens in response to stretch forces in the membrane lipid bilayer. May participate in the regulation of osmotic pressure changes within the cell. The chain is Large-conductance mechanosensitive channel from Pelodictyon phaeoclathratiforme (strain DSM 5477 / BU-1).